The sequence spans 400 residues: Carbamoyl phosphate synthase small chain (400 aa).

The segment at 1-199 is CPSase; that stretch reads MSNETNANST…PYVIEAEGEA (199 aa). L-glutamine is bound by residues S66, G250, and G252. One can recognise a Glutamine amidotransferase type-1 domain in the interval 200–395; it reads RHTVVAYDLG…VALMDEDSEN (196 aa). Catalysis depends on C278, which acts as the Nucleophile. 5 residues coordinate L-glutamine: F279, Q282, N320, G322, and F323. Catalysis depends on residues H368 and E370.

This sequence belongs to the CarA family. In terms of assembly, composed of two chains; the small (or glutamine) chain promotes the hydrolysis of glutamine to ammonia, which is used by the large (or ammonia) chain to synthesize carbamoyl phosphate. Tetramer of heterodimers (alpha,beta)4.

It catalyses the reaction hydrogencarbonate + L-glutamine + 2 ATP + H2O = carbamoyl phosphate + L-glutamate + 2 ADP + phosphate + 2 H(+). It carries out the reaction L-glutamine + H2O = L-glutamate + NH4(+). It participates in amino-acid biosynthesis; L-arginine biosynthesis; carbamoyl phosphate from bicarbonate: step 1/1. It functions in the pathway pyrimidine metabolism; UMP biosynthesis via de novo pathway; (S)-dihydroorotate from bicarbonate: step 1/3. Small subunit of the glutamine-dependent carbamoyl phosphate synthetase (CPSase). CPSase catalyzes the formation of carbamoyl phosphate from the ammonia moiety of glutamine, carbonate, and phosphate donated by ATP, constituting the first step of 2 biosynthetic pathways, one leading to arginine and/or urea and the other to pyrimidine nucleotides. The small subunit (glutamine amidotransferase) binds and cleaves glutamine to supply the large subunit with the substrate ammonia. The sequence is that of Carbamoyl phosphate synthase small chain from Corynebacterium efficiens (strain DSM 44549 / YS-314 / AJ 12310 / JCM 11189 / NBRC 100395).